Consider the following 1073-residue polypeptide: Semaphorin-6D (1073 aa).

An N-terminal signal peptide occupies residues 1 to 20 (MGFLLLWFCVLFLLVSRLRA). Residues 21-662 (VSFPEDDEPL…GESNQMVHMN (642 aa)) lie on the Extracellular side of the membrane. In terms of domain architecture, Sema spans 27–512 (DEPLNTVDYH…FSSCVVRIPL (486 aa)). N51 carries N-linked (GlcNAc...) asparagine glycosylation. 4 disulfides stabilise this stretch: C108–C118, C136–C145, C259–C370, and C284–C329. N283 carries an N-linked (GlcNAc...) asparagine glycan. Residues N435 and N461 are each glycosylated (N-linked (GlcNAc...) asparagine). 4 disulfide bridges follow: C477–C506, C515–C533, C521–C568, and C525–C541. A PSI domain is found at 514–569 (RCERYGSCKKSCIASRDPYCGWLSQGVCERVTLGMLPGGYEQDTEYGNTAHLGDCH). N-linked (GlcNAc...) asparagine glycosylation is present at N631. Residues 663–683 (VLITCVFAAFVLGAFIAGVAV) form a helical membrane-spanning segment. Residues 684 to 1073 (YCYRDMFVRK…SVRPLNKYTY (390 aa)) lie on the Cytoplasmic side of the membrane. Phosphoserine is present on residues S723, S734, and S744. 4 disordered regions span residues 745-825 (RKEL…GHIP), 839-876 (TSFS…VDSR), 919-986 (PPKV…SPNG), and 1021-1073 (LQPS…KYTY). T773 carries the post-translational modification Phosphothreonine. Positions 790 to 806 (SHSEKAHSHGASRKEHP) are enriched in basic and acidic residues. S931, S957, and S983 each carry phosphoserine. Residues 931 to 942 (SPPSTLPRNSPT) are compositionally biased toward polar residues. Composition is skewed to polar residues over residues 1021–1037 (LQPS…NGTL) and 1059–1073 (VPQT…KYTY).

Belongs to the semaphorin family. In terms of tissue distribution, expressed in brain and lung.

The protein localises to the cell membrane. Shows growth cone collapsing activity on dorsal root ganglion (DRG) neurons in vitro. May be a stop signal for the DRG neurons in their target areas, and possibly also for other neurons. May also be involved in the maintenance and remodeling of neuronal connections. Ligand of TREM2 with PLXNA1 as coreceptor in dendritic cells, plays a role in the generation of immune responses and skeletal homeostasis. This Mus musculus (Mouse) protein is Semaphorin-6D (Sema6d).